A 101-amino-acid chain; its full sequence is uncharacterized protein (101 aa).

May regulate the expression of phage structural components with protein P13. This is an uncharacterized protein from Pseudoalteromonas phage PM2 (Bacteriophage PM2).